Consider the following 610-residue polypeptide: MADDEQFSLCWNNFNTNLSAGFHESLCRGDLVDVSLAAEGQIVKAHRLVLSVCSPFFRKMFTQMPSNTHAIVFLNNVSHSALKDLIQFMYCGEVNVKQDALPAFISTAESLQIKGLTDNDPAPQPPQESSPPPAAPHVQQQQIPAQRVQRQQPRASARYKIETVDDGLGDEKQSTTQIVIQTTAAPQATIVQQQQPQQAAQQIQSQQLQTGTTTTATLVSTNKRSAQRSSLTPASSSAGVKRSKTSTSANVMDPLDSTTETGATTTAQLVPQQITVQTSVVSAAEAKLHQQSPQQVRQEEAEYIDLPMELPTKSEPDYSEDHGDAAGDAEGTYVEDDTYGDMRYDDSYFTENEDAGNQTAANTSGGGVTATTSKAVVKQQSQNYSESSFVDTSGDQGNTEAQAATSASATKIPPRKRGRPKTKVEDQTPKPKLLEKLQAATLNEEASEPAVYASTTKGGVKLIFNGHLFKFSFRKADYSVFQCCYREHGEECKVRVVCDQKRVFPYEGEHVHFMQASDKSCLPSQFMPGESGVISSLSPSKELLMKNTTKLEEADDKEDEDFEEFEIQEIDEIELDEPEKTPAKEEEVDPNDFREKIKRRLQKALQNKKK.

The tract at residues 1-160 (MADDEQFSLC…QQPRASARYK (160 aa)) is self-association. Positions 1 to 308 (MADDEQFSLC…EEAEYIDLPM (308 aa)) are interaction with Chi. One can recognise a BTB domain in the interval 32–98 (VDVSLAAEGQ…MYCGEVNVKQ (67 aa)). 4 disordered regions span residues 115–156 (GLTD…PRAS), 219–259 (VSTN…DSTT), 311–339 (PTKS…DDTY), and 386–432 (ESSF…PKPK). A compositionally biased stretch (pro residues) spans 122–135 (APQPPQESSPPPAA). Residues 136–156 (PHVQQQQIPAQRVQRQQPRAS) are compositionally biased toward low complexity. Over residues 222-238 (NKRSAQRSSLTPASSSA) the composition is skewed to polar residues. Ser230 bears the Phosphoserine mark. Basic and acidic residues predominate over residues 312–325 (TKSEPDYSEDHGDA). The span at 386–400 (ESSFVDTSGDQGNTE) shows a compositional bias: polar residues. Over residues 401–410 (AQAATSASAT) the composition is skewed to low complexity. Over residues 422–432 (TKVEDQTPKPK) the composition is skewed to basic and acidic residues. An FLYWCH-type zinc finger spans residues 452-512 (YASTTKGGVK…VFPYEGEHVH (61 aa)). The tract at residues 551–610 (LEEADDKEDEDFEEFEIQEIDEIELDEPEKTPAKEEEVDPNDFREKIKRRLQKALQNKKK) is interaction with su(Hw). The span at 567-577 (IQEIDEIELDE) shows a compositional bias: acidic residues. Positions 567–595 (IQEIDEIELDEPEKTPAKEEEVDPNDFRE) are disordered. Over residues 578 to 595 (PEKTPAKEEEVDPNDFRE) the composition is skewed to basic and acidic residues.

Can self-associate. Interacts with Chi. Interacts with Top2. Isoform mod2.2: Component of the gypsy chromatin insulator complex, composed of Cp190, mod(mdg4) and su(Hw). The gypsy chromatin insulator complex interacts with Topors via mod(mdg4) and su(Hw). Isoform mod2.2 interacts with Trl/GAGA and interaction with this protein may bypass the repressive effects of the su(Hw) insulator.

The protein localises to the nucleus. The protein resides in the chromosome. Component of the gypsy chromatin insulator complex which is required for the function of the gypsy chromatin insulator and other endogenous chromatin insulators. Chromatin insulators are regulatory elements which establish independent domains of transcriptional activity within eukaryotic genomes. Insulators have two defining properties; they can block the communication between an enhancer and a promoter when placed between them and can also buffer transgenes from position effect variegation (PEV). Insulators are proposed to structure the chromatin fiber into independent domains of differing transcriptional potential by promoting the formation of distinct chromatin loops. This chromatin looping may involve the formation of insulator bodies, where homotypic interactions between individual subunits of the insulator complex could promote the clustering of widely spaced insulators at the nuclear periphery. Within the gypsy insulator complex, this protein may control the nature of the repressive effect of su(Hw): in the absence of mod(mdg4) protein, su(Hw) exerts a bidirectional silencing effect, whereas in the presence of mod(mdg4), the silencing effect is unidirectional. Isoform H is specifically required to maintain the pairing of achiasmate homologs in male meiosis I which is mediated by the rDNA repeats on the achiasmate X-Y bivalents. Isoform H also plays a role in apoptotic regulatory pathways. The chain is Modifier of mdg4 from Drosophila melanogaster (Fruit fly).